The primary structure comprises 456 residues: MTTLTPIHVIGGGLAGTEAAWQIAQAGVPVILTEMRPERLSPAHHSEDLAELVCSNSFGAKAGDRAAGLLQTELRQLSSLIITTADRHAVPAGGALAVDRGIFSRSLTEQVASHPLVELRRGEVTEIPREGITVLTTGPLTSPALTEDLQQFTGMEYLSFFDAASPIVVGDSINKEVAFFASRYDKGEAAYLNCPFNREQYFNFWQALCEAEQAPLKDFDRETAKFFEGCLPIEELAQRGEDTMRYGPLKPVGLFDARLGDFRDPANKEKKPYAVVQLRQEDKAGQLWNMVGFQTNLRWGEQGRVFRLIPGLENAEFVRMGVMHRNTFINSPQLLTASLHFGDRQTLFAAGQLVGTEGYAAATAGGWLAGTNAARLALGLPLLTLPATTMMGALFNFISSASPKHFQPMPPNFGILPELPQRIRNKQERYGQYRDRALADLTTWQTSIKSLATCRV.

11 to 16 contributes to the FAD binding site; that stretch reads GGGLAG.

It belongs to the MnmG family. TrmFO subfamily. FAD is required as a cofactor.

It localises to the cytoplasm. It carries out the reaction uridine(54) in tRNA + (6R)-5,10-methylene-5,6,7,8-tetrahydrofolate + NADH + H(+) = 5-methyluridine(54) in tRNA + (6S)-5,6,7,8-tetrahydrofolate + NAD(+). It catalyses the reaction uridine(54) in tRNA + (6R)-5,10-methylene-5,6,7,8-tetrahydrofolate + NADPH + H(+) = 5-methyluridine(54) in tRNA + (6S)-5,6,7,8-tetrahydrofolate + NADP(+). Its function is as follows. Catalyzes the folate-dependent formation of 5-methyl-uridine at position 54 (M-5-U54) in all tRNAs. The polypeptide is Methylenetetrahydrofolate--tRNA-(uracil-5-)-methyltransferase TrmFO (Synechocystis sp. (strain ATCC 27184 / PCC 6803 / Kazusa)).